Here is a 445-residue protein sequence, read N- to C-terminus: Glutamate-1-semialdehyde 2,1-aminomutase (445 aa).

Lys281 bears the N6-(pyridoxal phosphate)lysine mark.

Belongs to the class-III pyridoxal-phosphate-dependent aminotransferase family. HemL subfamily. In terms of assembly, homodimer. Pyridoxal 5'-phosphate is required as a cofactor.

It is found in the cytoplasm. The enzyme catalyses (S)-4-amino-5-oxopentanoate = 5-aminolevulinate. Its pathway is porphyrin-containing compound metabolism; protoporphyrin-IX biosynthesis; 5-aminolevulinate from L-glutamyl-tRNA(Glu): step 2/2. The chain is Glutamate-1-semialdehyde 2,1-aminomutase from Nocardioides sp. (strain ATCC BAA-499 / JS614).